A 450-amino-acid chain; its full sequence is uncharacterized protein (450 aa).

An N6-(pyridoxal phosphate)lysine modification is found at Lys-283.

Belongs to the class-III pyridoxal-phosphate-dependent aminotransferase family. It depends on pyridoxal 5'-phosphate as a cofactor.

Its function is as follows. Essential for glycerol catabolism. This is an uncharacterized protein from Bacillus subtilis (strain 168).